Consider the following 189-residue polypeptide: Apolipoprotein D (189 aa).

The N-terminal stretch at M1–G20 is a signal peptide. Q21 is modified (pyrrolidone carboxylic acid). Intrachain disulfides connect C28/C134 and C61/C185. N-linked (GlcNAc...) asparagine glycans are attached at residues N65 and N98.

This sequence belongs to the calycin superfamily. Lipocalin family. In terms of assembly, homodimer. As to expression, highest levels of expression in brain, testis, virgin mammary gland and salivary gland. Moderate levels in skeletal muscle, lactating mammary gland and thymus. Low levels in lung and lymph node. No expression in kidney, pancreas, liver or spleen.

The protein localises to the secreted. Its function is as follows. APOD occurs in the macromolecular complex with lecithin-transport and binding of bilin. Appears to be able to transport a variety of ligands in a number of different contexts. In Mus musculus (Mouse), this protein is Apolipoprotein D (Apod).